Consider the following 276-residue polypeptide: Diaminopimelate epimerase (276 aa).

The substrate site is built by Asn13, Gln46, and Asn66. The active-site Proton donor is Cys75. Substrate is bound by residues 76–77 (GN), Asn159, Asn192, and 210–211 (ER). The active-site Proton acceptor is Cys219. Position 220–221 (220–221 (GT)) interacts with substrate.

Belongs to the diaminopimelate epimerase family. In terms of assembly, homodimer.

Its subcellular location is the cytoplasm. The catalysed reaction is (2S,6S)-2,6-diaminopimelate = meso-2,6-diaminopimelate. The protein operates within amino-acid biosynthesis; L-lysine biosynthesis via DAP pathway; DL-2,6-diaminopimelate from LL-2,6-diaminopimelate: step 1/1. Functionally, catalyzes the stereoinversion of LL-2,6-diaminopimelate (L,L-DAP) to meso-diaminopimelate (meso-DAP), a precursor of L-lysine and an essential component of the bacterial peptidoglycan. In Teredinibacter turnerae (strain ATCC 39867 / T7901), this protein is Diaminopimelate epimerase.